Reading from the N-terminus, the 364-residue chain is Aminomethyltransferase (364 aa).

Belongs to the GcvT family. In terms of assembly, the glycine cleavage system is composed of four proteins: P, T, L and H.

It carries out the reaction N(6)-[(R)-S(8)-aminomethyldihydrolipoyl]-L-lysyl-[protein] + (6S)-5,6,7,8-tetrahydrofolate = N(6)-[(R)-dihydrolipoyl]-L-lysyl-[protein] + (6R)-5,10-methylene-5,6,7,8-tetrahydrofolate + NH4(+). Its function is as follows. The glycine cleavage system catalyzes the degradation of glycine. This Escherichia coli (strain 55989 / EAEC) protein is Aminomethyltransferase.